A 292-amino-acid polypeptide reads, in one-letter code: Ribosomal protein L11 methyltransferase (292 aa).

S-adenosyl-L-methionine-binding residues include threonine 144, glycine 165, aspartate 187, and asparagine 229.

This sequence belongs to the methyltransferase superfamily. PrmA family.

It is found in the cytoplasm. The catalysed reaction is L-lysyl-[protein] + 3 S-adenosyl-L-methionine = N(6),N(6),N(6)-trimethyl-L-lysyl-[protein] + 3 S-adenosyl-L-homocysteine + 3 H(+). Its function is as follows. Methylates ribosomal protein L11. This is Ribosomal protein L11 methyltransferase from Ectopseudomonas mendocina (strain ymp) (Pseudomonas mendocina).